The sequence spans 325 residues: Glycerol-3-phosphate dehydrogenase [NAD(P)+] (325 aa).

NADPH contacts are provided by serine 14, phenylalanine 15, arginine 35, and lysine 109. Lysine 109 and glycine 137 together coordinate sn-glycerol 3-phosphate. Alanine 141 lines the NADPH pocket. 5 residues coordinate sn-glycerol 3-phosphate: lysine 192, aspartate 247, serine 257, arginine 258, and asparagine 259. Residue lysine 192 is the Proton acceptor of the active site. Arginine 258 provides a ligand contact to NADPH. NADPH is bound by residues leucine 282 and glutamate 284.

This sequence belongs to the NAD-dependent glycerol-3-phosphate dehydrogenase family.

The protein resides in the cytoplasm. The catalysed reaction is sn-glycerol 3-phosphate + NAD(+) = dihydroxyacetone phosphate + NADH + H(+). It catalyses the reaction sn-glycerol 3-phosphate + NADP(+) = dihydroxyacetone phosphate + NADPH + H(+). It functions in the pathway membrane lipid metabolism; glycerophospholipid metabolism. Its function is as follows. Catalyzes the reduction of the glycolytic intermediate dihydroxyacetone phosphate (DHAP) to sn-glycerol 3-phosphate (G3P), the key precursor for phospholipid synthesis. The chain is Glycerol-3-phosphate dehydrogenase [NAD(P)+] from Rickettsia africae (strain ESF-5).